The following is a 205-amino-acid chain: Ribosomal RNA small subunit methyltransferase G (205 aa).

Residues G73, L78, 124–125, and R138 each bind S-adenosyl-L-methionine; that span reads VE.

The protein belongs to the methyltransferase superfamily. RNA methyltransferase RsmG family.

It is found in the cytoplasm. It catalyses the reaction guanosine(527) in 16S rRNA + S-adenosyl-L-methionine = N(7)-methylguanosine(527) in 16S rRNA + S-adenosyl-L-homocysteine. Functionally, specifically methylates the N7 position of guanine in position 527 of 16S rRNA. The protein is Ribosomal RNA small subunit methyltransferase G of Actinobacillus pleuropneumoniae serotype 7 (strain AP76).